Reading from the N-terminus, the 356-residue chain is Protein MGF 360-10L (356 aa).

Residues 58–90 (DLNTALMIAAKENNYQLIKLFTEWGANINYGYI) form an ANK repeat. N-linked (GlcNAc...) asparagine; by host glycosylation occurs at N125. 2 helical membrane-spanning segments follow: residues 206-228 (LNTW…YLYE) and 249-271 (NFLT…LAAI). N352 carries an N-linked (GlcNAc...) asparagine; by host glycan.

The protein belongs to the asfivirus MGF 360 family.

Its subcellular location is the host membrane. Plays a role in virus cell tropism, and may be required for efficient virus replication in macrophages. The protein is Protein MGF 360-10L of Ornithodoros (relapsing fever ticks).